Here is a 132-residue protein sequence, read N- to C-terminus: Small ribosomal subunit protein uS8 (132 aa).

The protein belongs to the universal ribosomal protein uS8 family. As to quaternary structure, part of the 30S ribosomal subunit. Contacts proteins S5 and S12.

In terms of biological role, one of the primary rRNA binding proteins, it binds directly to 16S rRNA central domain where it helps coordinate assembly of the platform of the 30S subunit. The chain is Small ribosomal subunit protein uS8 from Ligilactobacillus salivarius (strain UCC118) (Lactobacillus salivarius).